The sequence spans 133 residues: Lymphocyte antigen 6 complex locus protein G6d (133 aa).

Residues 1–19 form the signal peptide; that stretch reads MKPQFVGILLSSLLGAALG. Positions 22-116 constitute a UPAR/Ly6 domain; the sequence is MRCYNCGGSP…ASHVAPAGIL (95 aa). A disulfide bond links Cys27 and Cys35. 2 O-linked (GalNAc...) threonine glycosylation sites follow: Thr40 and Thr41. Disulfide bonds link Cys42/Cys71 and Cys77/Cys96. Ser104 carries the GPI-anchor amidated serine lipid modification. Positions 105–133 are cleaved as a propeptide — removed in mature form; that stretch reads AVASHVAPAGILAAAATALTCLLPGLWSG.

As to quaternary structure, homodimer. O-glycosylated. Expressed in the adult lung, and in fetal liver, lung, kidney, brain and spleen.

It is found in the cell membrane. The protein resides in the cell projection. The protein localises to the filopodium. The polypeptide is Lymphocyte antigen 6 complex locus protein G6d (LY6G6D) (Homo sapiens (Human)).